Here is a 298-residue protein sequence, read N- to C-terminus: dTDP-4-dehydrorhamnose reductase (298 aa).

NADH-binding positions include 10–12, 35–36, and 59–61; these read GQV, DL, and AYT. NADPH is bound by residues 11 to 12, 35 to 36, 59 to 61, and Y98; these read QV, DL, and AYT. DTDP-beta-L-rhamnose is bound at residue 100–101; the sequence is TD. Positions 124 and 128 each coordinate NADH. Residues Y124 and K128 each contribute to the NADPH site. Y124 (proton donor/acceptor) is an active-site residue. DTDP-beta-L-rhamnose is bound at residue W149.

This sequence belongs to the dTDP-4-dehydrorhamnose reductase family. As to quaternary structure, homodimer. It depends on Mg(2+) as a cofactor.

The catalysed reaction is dTDP-beta-L-rhamnose + NADP(+) = dTDP-4-dehydro-beta-L-rhamnose + NADPH + H(+). Its pathway is carbohydrate biosynthesis; dTDP-L-rhamnose biosynthesis. The protein operates within bacterial outer membrane biogenesis; LPS O-antigen biosynthesis. Functionally, involved in the biosynthesis of the dTDP-L-rhamnose which is an important component of lipopolysaccharide (LPS). Catalyzes the reduction of dTDP-6-deoxy-L-lyxo-4-hexulose to yield dTDP-L-rhamnose. The protein is dTDP-4-dehydrorhamnose reductase of Burkholderia thailandensis (strain ATCC 700388 / DSM 13276 / CCUG 48851 / CIP 106301 / E264).